A 385-amino-acid polypeptide reads, in one-letter code: uncharacterized protein (385 aa).

K194 carries the post-translational modification N6-(pyridoxal phosphate)lysine.

The protein belongs to the class-V pyridoxal-phosphate-dependent aminotransferase family. The cofactor is pyridoxal 5'-phosphate.

This is an uncharacterized protein from Methanocaldococcus jannaschii (strain ATCC 43067 / DSM 2661 / JAL-1 / JCM 10045 / NBRC 100440) (Methanococcus jannaschii).